We begin with the raw amino-acid sequence, 289 residues long: ATP synthase gamma chain (289 aa).

It belongs to the ATPase gamma chain family. As to quaternary structure, F-type ATPases have 2 components, CF(1) - the catalytic core - and CF(0) - the membrane proton channel. CF(1) has five subunits: alpha(3), beta(3), gamma(1), delta(1), epsilon(1). CF(0) has three main subunits: a, b and c.

The protein localises to the cell inner membrane. Its function is as follows. Produces ATP from ADP in the presence of a proton gradient across the membrane. The gamma chain is believed to be important in regulating ATPase activity and the flow of protons through the CF(0) complex. In Histophilus somni (strain 2336) (Haemophilus somnus), this protein is ATP synthase gamma chain.